The primary structure comprises 87 residues: Small ribosomal subunit protein uS17 (87 aa).

The protein belongs to the universal ribosomal protein uS17 family. As to quaternary structure, part of the 30S ribosomal subunit.

Its function is as follows. One of the primary rRNA binding proteins, it binds specifically to the 5'-end of 16S ribosomal RNA. The protein is Small ribosomal subunit protein uS17 of Staphylococcus haemolyticus (strain JCSC1435).